The primary structure comprises 297 residues: Cbb3-type cytochrome c oxidase subunit CcoP (297 aa).

Over 1 to 35 the chain is Cytoplasmic; it reads MSKKPTTKKEVQTTGHSWDGIEELNTPLPRWWLWT. The chain crosses the membrane as a helical span at residues 36-56; that stretch reads FYATIVWGVAYSIAMPAWPIF. The Periplasmic portion of the chain corresponds to 57–297; that stretch reads ASGATPGILG…SYVHSLGGGQ (241 aa). Cytochrome c domains lie at 108–199 and 206–294; these read YTRN…LKIS and ARAT…HSLG. Cys-121, Cys-124, His-125, Met-174, Cys-219, Cys-222, His-223, and Met-264 together coordinate heme c.

Belongs to the CcoP / FixP family. In terms of assembly, component of the cbb3-type cytochrome c oxidase at least composed of CcoN, CcoO, CcoQ and CcoP. Interacts with CcoH (via transmembrane domain). The cofactor is heme c.

The protein resides in the cell inner membrane. It participates in energy metabolism; oxidative phosphorylation. C-type cytochrome. Part of the cbb3-type cytochrome c oxidase complex. CcoP subunit is required for transferring electrons from donor cytochrome c via its heme groups to CcoO subunit. From there, electrons are shuttled to the catalytic binuclear center of CcoN subunit where oxygen reduction takes place. The complex also functions as a proton pump. This is Cbb3-type cytochrome c oxidase subunit CcoP from Rhodobacter capsulatus (strain ATCC BAA-309 / NBRC 16581 / SB1003).